The sequence spans 140 residues: Protein BIC1 (140 aa).

Residues 1–10 (MMNIDDTTSP) are compositionally biased toward polar residues. The interval 1-71 (MMNIDDTTSP…RVDTGRERLK (71 aa)) is disordered. Residues 42–68 (ADKKDLALLEEKPKQSQEEDRVDTGRE) are compositionally biased toward basic and acidic residues.

Interacts with CRY2 in both darkness and light.

The protein resides in the nucleus. Functionally, regulates the blue-light dependent dimerization of CRY2 and formation of photobodies. Interacts with photoexited CRY2 to inhibit its activity. Inhibits CRY phosphorylation. This Arabidopsis thaliana (Mouse-ear cress) protein is Protein BIC1.